The primary structure comprises 494 residues: Glutamyl-tRNA(Gln) amidotransferase subunit A (494 aa).

Catalysis depends on charge relay system residues K78 and S158. Residue S182 is the Acyl-ester intermediate of the active site.

The protein belongs to the amidase family. GatA subfamily. In terms of assembly, heterotrimer of A, B and C subunits.

It catalyses the reaction L-glutamyl-tRNA(Gln) + L-glutamine + ATP + H2O = L-glutaminyl-tRNA(Gln) + L-glutamate + ADP + phosphate + H(+). In terms of biological role, allows the formation of correctly charged Gln-tRNA(Gln) through the transamidation of misacylated Glu-tRNA(Gln) in organisms which lack glutaminyl-tRNA synthetase. The reaction takes place in the presence of glutamine and ATP through an activated gamma-phospho-Glu-tRNA(Gln). This chain is Glutamyl-tRNA(Gln) amidotransferase subunit A, found in Xanthobacter autotrophicus (strain ATCC BAA-1158 / Py2).